Consider the following 206-residue polypeptide: LexA repressor (206 aa).

A DNA-binding region (H-T-H motif) is located at residues 28–48 (VREIGEAVGLASSSTVHGHLS). Catalysis depends on for autocatalytic cleavage activity residues Ser-129 and Lys-167.

Belongs to the peptidase S24 family. As to quaternary structure, homodimer.

The enzyme catalyses Hydrolysis of Ala-|-Gly bond in repressor LexA.. Functionally, represses a number of genes involved in the response to DNA damage (SOS response), including recA and lexA. In the presence of single-stranded DNA, RecA interacts with LexA causing an autocatalytic cleavage which disrupts the DNA-binding part of LexA, leading to derepression of the SOS regulon and eventually DNA repair. The protein is LexA repressor of Staphylococcus epidermidis (strain ATCC 35984 / DSM 28319 / BCRC 17069 / CCUG 31568 / BM 3577 / RP62A).